A 425-amino-acid chain; its full sequence is Glutamate-1-semialdehyde 2,1-aminomutase (425 aa).

Position 265 is an N6-(pyridoxal phosphate)lysine (Lys265).

This sequence belongs to the class-III pyridoxal-phosphate-dependent aminotransferase family. HemL subfamily. As to quaternary structure, homodimer. Pyridoxal 5'-phosphate is required as a cofactor.

The protein resides in the cytoplasm. The enzyme catalyses (S)-4-amino-5-oxopentanoate = 5-aminolevulinate. Its pathway is porphyrin-containing compound metabolism; protoporphyrin-IX biosynthesis; 5-aminolevulinate from L-glutamyl-tRNA(Glu): step 2/2. This is Glutamate-1-semialdehyde 2,1-aminomutase from Desulfatibacillum aliphaticivorans.